We begin with the raw amino-acid sequence, 947 residues long: Beta-glucosidase (947 aa).

The active site involves D696.

Belongs to the glycosyl hydrolase 3 family.

It catalyses the reaction Hydrolysis of terminal, non-reducing beta-D-glucosyl residues with release of beta-D-glucose.. Its pathway is glycan metabolism; cellulose degradation. The polypeptide is Beta-glucosidase (Ruminococcus albus).